Consider the following 437-residue polypeptide: Protein translocase subunit SecY (437 aa).

Helical transmembrane passes span leucine 19–valine 39, leucine 69–leucine 89, valine 122–phenylalanine 142, isoleucine 157–leucine 177, glycine 189–isoleucine 209, tryptophan 219–valine 239, valine 276–alanine 296, proline 316–isoleucine 336, glycine 378–alanine 398, and glutamine 400–valine 420.

It belongs to the SecY/SEC61-alpha family. Component of the Sec protein translocase complex. Heterotrimer consisting of SecY, SecE and SecG subunits. The heterotrimers can form oligomers, although 1 heterotrimer is thought to be able to translocate proteins. Interacts with the ribosome. Interacts with SecDF, and other proteins may be involved. Interacts with SecA.

The protein resides in the cell membrane. In terms of biological role, the central subunit of the protein translocation channel SecYEG. Consists of two halves formed by TMs 1-5 and 6-10. These two domains form a lateral gate at the front which open onto the bilayer between TMs 2 and 7, and are clamped together by SecE at the back. The channel is closed by both a pore ring composed of hydrophobic SecY resides and a short helix (helix 2A) on the extracellular side of the membrane which forms a plug. The plug probably moves laterally to allow the channel to open. The ring and the pore may move independently. The polypeptide is Protein translocase subunit SecY (Streptomyces galbus).